The following is a 1143-amino-acid chain: AP-3 complex subunit delta (1143 aa).

8 HEAT repeats span residues 129–166, 167–203, 205–242, 245–279, 280–317, 318–354, 356–389, and 416–455; these read DLAR…RYPE, SLRP…RNPK, YLPL…HEPR, KKLI…SDHI, PLMK…IHPK, AVSE…KKNI, DIVF…MGTY, and LIAS…PTEG. 5 disordered regions span residues 520–541, 634–692, 704–728, 741–792, and 829–899; these read KIPS…DQNE, QEPI…RHPI, KQAN…PENI, HVGA…NDAL, and KKNA…QAAA. Over residues 524-540 the composition is skewed to acidic residues; the sequence is LDDDDEEEEAQEEEDQN. A coiled-coil region spans residues 526-550; the sequence is DDDEEEEAQEEEDQNEITHEIVQEC. Residues 653-662 show a composition bias toward basic residues; sequence HQKKHHKHHR. A compositionally biased stretch (acidic residues) spans 666-675; that stretch reads DGDDDEDDET. Residues 814–835 are a coiled coil; sequence TDIIKEKEREMAMLAKKNAKLS. The segment covering 840–849 has biased composition (polar residues); sequence PSTANYSEVT. Low complexity-rich tracts occupy residues 854 to 867 and 881 to 899; these read APAK…AAGS and KPAA…QAAA. The 103-residue stretch at 914-1016 folds into the GAE domain; sequence KTILDDDNFK…FTLLASPSSS (103 aa).

This sequence belongs to the adaptor complexes large subunit family. As to quaternary structure, adaptor protein complex 3 (AP-3) is a heterotetramer composed of two large adaptins (delta-type subunit and beta-type subunit), a medium adaptin (mu-type subunit) and a small adaptin (sigma-type subunit).

Its subcellular location is the endosome membrane. Its function is as follows. Part of the AP-3 complex, an adaptor-related complex which is essential for the compartmentalization of the endocytic pathway. In Dictyostelium discoideum (Social amoeba), this protein is AP-3 complex subunit delta (ap3d1).